Reading from the N-terminus, the 727-residue chain is Putative E3 ubiquitin-protein ligase UNKL (727 aa).

A disordered region spans residues 1–21 (MPSVSKAAAAALSGSPPQTEK). C3H1-type zinc fingers lie at residues 75 to 104 (YSPDIYCSKYDEATGLCPDGDECPYLHRTT), 115 to 145 (YYKTGTCIHETDARGHCVKNGLHCAFAHGPL), 243 to 277 (QYRSTPCPSVKHGDEWGEPSRCDGGDSCQYCHSRT), and 285 to 313 (IYKSTKCNDMRQTGYCPRGPFCAFAHTEK). Positions 330–339 (STSAYSSQPG) are enriched in polar residues. 3 disordered regions span residues 330 to 360 (STSAYSSQPGSAKRKDSPSEGSQKATEDSKQ), 446 to 514 (LTGP…ATLG), and 543 to 562 (SPSPILNSGPSASSSASPNS). The span at 463-495 (SLPRSPSLHSSSSLSTSPLSSLSQSLSGPLVSS) shows a compositional bias: low complexity. An RING-type zinc finger spans residues 686–721 (CVACQERAHGTVLRPCQHRVLCEPCAASTPECPYCK).

It belongs to the unkempt family. In terms of assembly, interacts with the GTP-bound form of Rac1. Interacts with Baf60b/Smarcd2. Post-translationally, ubiquitination is enhanced by activated Rac1. The presence of the RING finger domain is not essential for ubiquitination to occur. Ubiquitous.

It is found in the cytoplasm. The protein resides in the nucleus. The protein operates within protein modification; protein ubiquitination. Functionally, may participate in a protein complex showing an E3 ligase activity regulated by Rac1. Ubiquitination is directed towards itself and possibly other substrates, such as Baf60b/Smarcd2. Intrinsic E3 ligase activity has not been proven. This Mus musculus (Mouse) protein is Putative E3 ubiquitin-protein ligase UNKL (Unkl).